Consider the following 213-residue polypeptide: MVRNEIKAVKEESKKRNFLESIEISINLKDVDLSDPKKRINEEIVLPSGRGKDLKVALISSEEMKLKAKNADYTFSPEDVSKFVDDKKSFKKLANKVDFFVAESTLMSSIGKNLGVILGPRGKIPRPVPPGQDPTALIENLKKSVRARSRDRRTFHVPIGTREMSDDDLYNNFVTVYKRIVSRLDKGPGNIDSIYIKTTMGKAIKVETGDLND.

This sequence belongs to the universal ribosomal protein uL1 family. Part of the 50S ribosomal subunit.

Binds directly to 23S rRNA. Probably involved in E site tRNA release. Its function is as follows. Protein L1 is also a translational repressor protein, it controls the translation of its operon by binding to its mRNA. The sequence is that of Large ribosomal subunit protein uL1 from Picrophilus torridus (strain ATCC 700027 / DSM 9790 / JCM 10055 / NBRC 100828 / KAW 2/3).